Here is a 193-residue protein sequence, read N- to C-terminus: Sarcoplasmic calcium-binding protein, alpha chain (193 aa).

IgE-binding epitope regions lie at residues 10 to 36 and 49 to 72; these read KYVVRYMYDIDNNGFLDKNDFECLAVR and DAYANNQKIMRNLWNEIAELADFN. EF-hand domains follow at residues 16-40, 57-92, and 101-136; these read MYDIDNNGFLDKNDFECLAVRNTLI, IMRNLWNEIAELADFNKDGEVTVDEFKQAVQKHCQG, and AFKVFIANQFKAIDVNGDGKVGLDEYRLDCITRSAF. Residues D18, D20, N22, D29, D70, N72, D74, E76, E81, D114, N116, D118, K120, and E125 each contribute to the Ca(2+) site. Residues 130 to 147 form an igE-binding epitope region; sequence CITRSAFAEVKEIDDAYN.

In terms of assembly, SCPs from crayfish, lobster, and shrimp are polymorphic dimers; three isotypes (alpha-alpha, alpha-beta, and beta-beta) have been identified. In terms of tissue distribution, expressed in tail muscle (at protein level).

Like parvalbumins, SCPs seem to be more abundant in fast contracting muscles, but no functional relationship can be established from this distribution. The chain is Sarcoplasmic calcium-binding protein, alpha chain from Penaeus vannamei (Whiteleg shrimp).